A 136-amino-acid polypeptide reads, in one-letter code: Large ribosomal subunit protein uL16 (136 aa).

It belongs to the universal ribosomal protein uL16 family. Part of the 50S ribosomal subunit.

In terms of biological role, binds 23S rRNA and is also seen to make contacts with the A and possibly P site tRNAs. In Psychromonas ingrahamii (strain DSM 17664 / CCUG 51855 / 37), this protein is Large ribosomal subunit protein uL16.